A 598-amino-acid chain; its full sequence is Elongation factor 4 (598 aa).

Residues 4-185 (KNIRNFSIIA…TIIAKIPPPK (182 aa)) form the tr-type G domain. Residues 16–21 (DHGKST) and 132–135 (NKID) each bind GTP.

This sequence belongs to the TRAFAC class translation factor GTPase superfamily. Classic translation factor GTPase family. LepA subfamily.

The protein resides in the cell membrane. The catalysed reaction is GTP + H2O = GDP + phosphate + H(+). Required for accurate and efficient protein synthesis under certain stress conditions. May act as a fidelity factor of the translation reaction, by catalyzing a one-codon backward translocation of tRNAs on improperly translocated ribosomes. Back-translocation proceeds from a post-translocation (POST) complex to a pre-translocation (PRE) complex, thus giving elongation factor G a second chance to translocate the tRNAs correctly. Binds to ribosomes in a GTP-dependent manner. The polypeptide is Elongation factor 4 (Mycoplasma genitalium (strain ATCC 33530 / DSM 19775 / NCTC 10195 / G37) (Mycoplasmoides genitalium)).